The sequence spans 357 residues: GTPase Obg (357 aa).

Positions 1–159 (MKFVDEAEIQ…RTLKLELKLL (159 aa)) constitute an Obg domain. The region spanning 160–343 (ADIGMLGFPN…IMKSAMTLFE (184 aa)) is the OBG-type G domain. Residues 166-173 (GFPNVGKS), 191-195 (FTTLY), 213-216 (DVPG), 293-296 (NKAD), and 324-326 (SAV) contribute to the GTP site. Mg(2+) is bound by residues Ser-173 and Thr-193.

The protein belongs to the TRAFAC class OBG-HflX-like GTPase superfamily. OBG GTPase family. In terms of assembly, monomer. Requires Mg(2+) as cofactor.

It is found in the cytoplasm. An essential GTPase which binds GTP, GDP and possibly (p)ppGpp with moderate affinity, with high nucleotide exchange rates and a fairly low GTP hydrolysis rate. Plays a role in control of the cell cycle, stress response, ribosome biogenesis and in those bacteria that undergo differentiation, in morphogenesis control. In Xylella fastidiosa (strain M23), this protein is GTPase Obg.